The chain runs to 150 residues: Transcription antitermination protein NusB (150 aa).

The protein belongs to the NusB family.

Its function is as follows. Involved in transcription antitermination. Required for transcription of ribosomal RNA (rRNA) genes. Binds specifically to the boxA antiterminator sequence of the ribosomal RNA (rrn) operons. The chain is Transcription antitermination protein NusB from Streptococcus pyogenes serotype M2 (strain MGAS10270).